The primary structure comprises 498 residues: Putrescine N-hydroxylase (498 aa).

FAD contacts are provided by phenylalanine 23, aspartate 43, lysine 45, tryptophan 50, histidine 51, and glutamine 62. Residues glutamine 62 and arginine 104 each coordinate NADP(+). Position 127 (valine 127) interacts with FAD. 4 residues coordinate NADP(+): serine 207, arginine 231, tyrosine 275, and leucine 309. Residues asparagine 386, proline 397, and leucine 399 each coordinate FAD. Polar residues predominate over residues 443–474 (LESNTHSAVTPSKTRQGLNPSAKSVQQPSIEP). The disordered stretch occupies residues 443–498 (LESNTHSAVTPSKTRQGLNPSAKSVQQPSIEPQTALRIAPTGGNVSALMAPNKEAQ).

Belongs to the lysine N(6)-hydroxylase/L-ornithine N(5)-oxygenase family. Requires FAD as cofactor.

The catalysed reaction is putrescine + NADPH + O2 = N-hydroxyputrescine + NADP(+) + H2O. It participates in siderophore biosynthesis. In terms of biological role, N-hydroxylating monooxygenase involved in the biosynthesis of the siderophore putrebactin. Catalyzes the N-hydroxylation of the aliphatic diamine putrescine into N-hydroxyputrescine (NHP). In Shewanella oneidensis (strain ATCC 700550 / JCM 31522 / CIP 106686 / LMG 19005 / NCIMB 14063 / MR-1), this protein is Putrescine N-hydroxylase.